The chain runs to 80 residues: Raniseptin-7 (80 aa).

Residues 1-22 (MAFLKKSLFLVLFLGIVSLSIC) form the signal peptide. Residues 23-49 (EEEKREGEEEEKQEEENEELSEEELRE) constitute a propeptide that is removed on maturation. A disordered region spans residues 27 to 46 (REGEEEEKQEEENEELSEEE). Residues 30-44 (EEEEKQEEENEELSE) are compositionally biased toward acidic residues.

It belongs to the frog skin active peptide (FSAP) family. Dermaseptin subfamily. As to expression, expressed by the skin glands.

The protein resides in the secreted. Has antibacterial activity. The chain is Raniseptin-7 from Boana raniceps (Chaco tree frog).